The sequence spans 307 residues: Elongation factor Ts (307 aa).

The interval 80-83 (TDFV) is involved in Mg(2+) ion dislocation from EF-Tu.

The protein belongs to the EF-Ts family.

It is found in the cytoplasm. Its function is as follows. Associates with the EF-Tu.GDP complex and induces the exchange of GDP to GTP. It remains bound to the aminoacyl-tRNA.EF-Tu.GTP complex up to the GTP hydrolysis stage on the ribosome. The polypeptide is Elongation factor Ts (Rhodopseudomonas palustris (strain BisA53)).